A 503-amino-acid polypeptide reads, in one-letter code: Potassium voltage-gated channel subfamily V member 1 (503 aa).

Disordered stretches follow at residues M1–S20 and K171–C192. At L3 to R213 the chain is on the cytoplasmic side. Positions L10–S20 are enriched in low complexity. A compositionally biased stretch (basic and acidic residues) spans K171–E184. Residues I214–S234 form a helical membrane-spanning segment. At A235–N241 the chain is on the extracellular side. Residues L242–L262 form a helical membrane-spanning segment. Residues R263–N279 are Cytoplasmic-facing. A helical membrane pass occupies residues I280–G300. The Extracellular segment spans residues S301–R312. A helical; Voltage-sensor transmembrane segment spans residues L313 to G334. Over L335–E348 the chain is Cytoplasmic. The helical transmembrane segment at V349–F369 threads the bilayer. Positions T395–D400 match the Selectivity filter motif. The chain crosses the membrane as a helical span at residues I410–I430. The Cytoplasmic segment spans residues N431 to F503.

This sequence belongs to the potassium channel family. V (TC 1.A.1.2) subfamily. Kv8.1/KCNV1 sub-subfamily. In terms of assembly, heteromultimer with KCNB1 and KCNB2. Interacts with KCNC4 and KCND1. In terms of tissue distribution, detected in brain, in neocortex, olfactory tubercle, hippocampus, dentate gyrus, piriform cortex and amygdala. Detected in Purkinje cells and granular cells of the cerebellum, in hippocampal CA4 neurons and neocortex pyramidal cells.

It localises to the cell membrane. In terms of biological role, potassium channel subunit that does not form functional channels by itself. Modulates KCNB1 and KCNB2 channel activity by shifting the threshold for inactivation to more negative values and by slowing the rate of inactivation. Can down-regulate the channel activity of KCNB1, KCNB2, KCNC4 and KCND1, possibly by trapping them in intracellular membranes. The chain is Potassium voltage-gated channel subfamily V member 1 (Kcnv1) from Rattus norvegicus (Rat).